The sequence spans 320 residues: MQYAKISGTGSYLPANRVSNDDLAQKVDTSDEWITARTGIKFRHIAAENEKTSDLAAEAARRALDAAGLNGNEIDLIIVATATPDMQFPSTATIVQQKLGITNGCPAFDVQAVCAGFMYALTTANAYIKSGMAKNALVIGAETFSRIVDWNDRTTCVLFGDGAGAVVLSASDTPGIIHSKLKADGNYLKLLNVPGQIACGKVSGSPYISMDGPGVFKFAVKMLSKIADDVIEEAGYTAAQIDWIVPHQANRRIIESTAKHLGLSMDKVVLTVQDHGNTSAASIPLALDTGIRSGQIKRGQNLLLEGIGGGFAWGAVLLQY.

Residues Cys114 and His247 contribute to the active site. Residues 248-252 (QANRR) form an ACP-binding region. Asn277 is a catalytic residue.

The protein belongs to the thiolase-like superfamily. FabH family. As to quaternary structure, homodimer.

It is found in the cytoplasm. It catalyses the reaction malonyl-[ACP] + acetyl-CoA + H(+) = 3-oxobutanoyl-[ACP] + CO2 + CoA. Its pathway is lipid metabolism; fatty acid biosynthesis. In terms of biological role, catalyzes the condensation reaction of fatty acid synthesis by the addition to an acyl acceptor of two carbons from malonyl-ACP. Catalyzes the first condensation reaction which initiates fatty acid synthesis and may therefore play a role in governing the total rate of fatty acid production. Possesses both acetoacetyl-ACP synthase and acetyl transacylase activities. Its substrate specificity determines the biosynthesis of branched-chain and/or straight-chain of fatty acids. The sequence is that of Beta-ketoacyl-[acyl-carrier-protein] synthase III from Neisseria meningitidis serogroup A / serotype 4A (strain DSM 15465 / Z2491).